Consider the following 232-residue polypeptide: Large ribosomal subunit protein uL1 (232 aa).

It belongs to the universal ribosomal protein uL1 family. As to quaternary structure, part of the 50S ribosomal subunit.

Binds directly to 23S rRNA. The L1 stalk is quite mobile in the ribosome, and is involved in E site tRNA release. Its function is as follows. Protein L1 is also a translational repressor protein, it controls the translation of the L11 operon by binding to its mRNA. The polypeptide is Large ribosomal subunit protein uL1 (Lysinibacillus sphaericus (strain C3-41)).